The primary structure comprises 381 residues: Cytochrome b (381 aa).

Helical transmembrane passes span 34–54 (FGSL…FLAM), 78–99 (WLIR…YLHI), 114–134 (WNIG…GYVL), and 179–199 (FFAF…IHLL). Residues histidine 84 and histidine 98 each contribute to the heme b site. 2 residues coordinate heme b: histidine 183 and histidine 197. Residue histidine 202 coordinates a ubiquinone. 4 helical membrane passes run 227–247 (YKDL…ALFM), 289–309 (LGGV…PLLH), 321–341 (LTQI…WIGG), and 348–368 (FITV…IIMP).

It belongs to the cytochrome b family. The cytochrome bc1 complex contains 3 respiratory subunits (MT-CYB, CYC1 and UQCRFS1), 2 core proteins (UQCRC1 and UQCRC2) and probably 6 low-molecular weight proteins. Heme b is required as a cofactor.

The protein localises to the mitochondrion inner membrane. Its function is as follows. Component of the ubiquinol-cytochrome c reductase complex (complex III or cytochrome b-c1 complex) that is part of the mitochondrial respiratory chain. The b-c1 complex mediates electron transfer from ubiquinol to cytochrome c. Contributes to the generation of a proton gradient across the mitochondrial membrane that is then used for ATP synthesis. The polypeptide is Cytochrome b (mt-cyb) (Sphyrna tiburo tiburo (Hammerhead shark)).